The chain runs to 70 residues: Conotoxin Im23.3 (70 aa).

The first 22 residues, 1-22, serve as a signal peptide directing secretion; sequence MIMRMTLTLFVLVVMTAASASG. Positions 23-28 are excised as a propeptide; it reads DALTEA. 3 disulfides stabilise this stretch: cysteine 34–cysteine 41, cysteine 45–cysteine 53, and cysteine 54–cysteine 69.

This sequence belongs to the conotoxin K superfamily. In terms of tissue distribution, expressed by the venom duct.

The protein resides in the secreted. Neurotoxin that induces excitatory symptoms in mice following intracranial administration. No symptoms are observed after intraperitoneal and intravenous (tail vein) injections. In Conus imperialis (Imperial cone), this protein is Conotoxin Im23.3.